The chain runs to 287 residues: Flagellin (287 aa).

Belongs to the bacterial flagellin family.

The protein resides in the secreted. Its subcellular location is the bacterial flagellum. Functionally, flagellin is the subunit protein which polymerizes to form the filaments of bacterial flagella. This is Flagellin (flaA) from Listeria monocytogenes serovar 1/2a (strain ATCC BAA-679 / EGD-e).